Consider the following 250-residue polypeptide: Ribonuclease PH (250 aa).

Phosphate-binding positions include Arg-87 and 125-127 (GTR).

This sequence belongs to the RNase PH family. Homohexameric ring arranged as a trimer of dimers.

It carries out the reaction tRNA(n+1) + phosphate = tRNA(n) + a ribonucleoside 5'-diphosphate. Its function is as follows. Phosphorolytic 3'-5' exoribonuclease that plays an important role in tRNA 3'-end maturation. Removes nucleotide residues following the 3'-CCA terminus of tRNAs; can also add nucleotides to the ends of RNA molecules by using nucleoside diphosphates as substrates, but this may not be physiologically important. Probably plays a role in initiation of 16S rRNA degradation (leading to ribosome degradation) during starvation. This chain is Ribonuclease PH, found in Moorella thermoacetica (strain ATCC 39073 / JCM 9320).